The chain runs to 236 residues: Small ribosomal subunit protein uS2c (236 aa).

Belongs to the universal ribosomal protein uS2 family.

The protein localises to the plastid. It is found in the chloroplast. The sequence is that of Small ribosomal subunit protein uS2c (rps2) from Oryza nivara (Indian wild rice).